Here is a 276-residue protein sequence, read N- to C-terminus: Cell wall synthesis protein KRE9 (276 aa).

An N-terminal signal peptide occupies residues 1–21 (MRLQRNSIICALVFLVSFVLG).

It belongs to the KRE9/KNH1 family. O-glycosylated.

The protein localises to the secreted. Its subcellular location is the cell wall. In terms of biological role, involved in cell wall beta(1-&gt;6) glucan synthesis. This Saccharomyces cerevisiae (strain ATCC 204508 / S288c) (Baker's yeast) protein is Cell wall synthesis protein KRE9.